The following is a 172-amino-acid chain: Ubiquitin-conjugating enzyme E2 2 (172 aa).

One can recognise a UBC core domain in the interval 4 to 150 (PARRRLMRDF…VKETVEKSWE (147 aa)). Residue C88 is the Glycyl thioester intermediate of the active site. S120 bears the Phosphoserine; by SGV1 mark. Residues 145 to 172 (VEKSWEDDMDDMDDDDDDDDDDDDDEAD) form a disordered region. The segment covering 151–172 (DDMDDMDDDDDDDDDDDDDEAD) has biased composition (acidic residues).

The protein belongs to the ubiquitin-conjugating enzyme family. In terms of assembly, forms a heterodimer complexes with the E3 enzymes BRE1, RAD18 and UBR1. Also interacts with UBR2, RTF1, PAF1 and the RNA polymerase II hyperphosphorylated form. The interaction with RNA polymerase II is BRE1- and PAF1-dependent. In terms of processing, the N-terminus is blocked.

It is found in the cytoplasm. The protein localises to the nucleus. The enzyme catalyses S-ubiquitinyl-[E1 ubiquitin-activating enzyme]-L-cysteine + [E2 ubiquitin-conjugating enzyme]-L-cysteine = [E1 ubiquitin-activating enzyme]-L-cysteine + S-ubiquitinyl-[E2 ubiquitin-conjugating enzyme]-L-cysteine.. The protein operates within protein modification; protein ubiquitination. E2 ubiquitin-conjugating enzyme that accepts ubiquitin from the ubiquitin-activating enzyme E1 and transfers it to a E3 ubiquitin-protein ligase. In association with the E3 enzyme BRE1 and LGE1, it plays a role in transcription regulation by catalyzing the monoubiquitination of histone H2B to form H2BK123ub1. H2BK123ub1 gives a specific tag for epigenetic transcriptional activation, elongation by RNA polymerase II, telomeric silencing, and is also a prerequisite for H3K4me and H3K79me formation. In association with the E3 enzyme RAD18, it catalyzes the monoubiquitination of POL30 'Lys-164', involved in postreplication repair of UV-damaged DNA. The RAD6/UBC2-RAD18 complex is also involved in prevention of spontaneous mutations caused by 7,8-dihydro-8-oxoguanine. In association with the E3 enzyme UBR1, is involved in N-end rule-dependent protein degradation. Also involved in sporulation. This chain is Ubiquitin-conjugating enzyme E2 2 (RAD6), found in Saccharomyces cerevisiae (strain ATCC 204508 / S288c) (Baker's yeast).